The following is a 200-amino-acid chain: Ribonuclease T2 (200 aa).

An intrachain disulfide couples Cys17 to Cys22. The active site involves His32. The cysteines at positions 42 and 89 are disulfide-linked. N-linked (GlcNAc...) asparagine glycans are attached at residues Asn43 and Asn73. Active-site residues include Glu82 and His86. Asn116 is a glycosylation site (N-linked (GlcNAc...) asparagine). 2 disulfides stabilise this stretch: Cys152–Cys188 and Cys170–Cys180.

Belongs to the RNase T2 family.

Its subcellular location is the secreted. It localises to the lysosome lumen. The protein localises to the endoplasmic reticulum lumen. It is found in the mitochondrion intermembrane space. It carries out the reaction a ribonucleotidyl-ribonucleotide-RNA + H2O = a 3'-end 3'-phospho-ribonucleotide-RNA + a 5'-end dephospho-ribonucleoside-RNA + H(+). It catalyses the reaction an adenylyl-uridine-RNA = a 3'-end 2',3'-cyclophospho-AMP-RNA + a 5'-end dephospho-uridine-RNA. The enzyme catalyses a guanylyl-uridine-RNA = a 3'-end 2',3'-cyclophospho-GMP-RNA + a 5'-end dephospho-uridine-RNA. With respect to regulation, inhibited by Zn(2+) and Cu(2+). Its function is as follows. Ribonuclease that plays an essential role in innate immune response by recognizing and degrading RNAs from microbial pathogens that are subsequently sensed by TLR8. Cleaves preferentially single-stranded RNA molecules between purine and uridine residues, which critically contributes to the supply of catabolic uridine and the generation of purine-2',3'-cyclophosphate-terminated oligoribonucleotides. In turn, RNase T2 degradation products promote the RNA-dependent activation of TLR8. In plasmacytoid dendritic cells, it cooperates with PLD3 or PLD4 5'-&gt;3' exonucleases to process RNA fragments and release 2',3'-cyclic guanosine monophosphate (2',3'-cGMP), a potent stimulatory ligand for TLR7. Also plays a key role in degradation of mitochondrial RNA and processing of non-coding RNA imported from the cytosol into mitochondria. Participates as well in degradation of mitochondrion-associated cytosolic rRNAs. The chain is Ribonuclease T2 (RNASET2) from Sus scrofa (Pig).